The primary structure comprises 78 residues: Acyl carrier protein (78 aa).

Positions 2–77 constitute a Carrier domain; that stretch reads SDIAERVKKI…DAIKFLEKNA (76 aa). Serine 37 is modified (O-(pantetheine 4'-phosphoryl)serine).

The protein belongs to the acyl carrier protein (ACP) family. In terms of processing, 4'-phosphopantetheine is transferred from CoA to a specific serine of apo-ACP by AcpS. This modification is essential for activity because fatty acids are bound in thioester linkage to the sulfhydryl of the prosthetic group.

It is found in the cytoplasm. Its pathway is lipid metabolism; fatty acid biosynthesis. Carrier of the growing fatty acid chain in fatty acid biosynthesis. This is Acyl carrier protein from Xanthobacter autotrophicus (strain ATCC BAA-1158 / Py2).